Reading from the N-terminus, the 198-residue chain is Recombination protein RecR (198 aa).

The segment at 57–72 (CAQCRTLTEHSLCEYC) adopts a C4-type zinc-finger fold. In terms of domain architecture, Toprim spans 80–175 (SLLCIVESPA…RTTRIAHGIP (96 aa)).

This sequence belongs to the RecR family.

Its function is as follows. May play a role in DNA repair. It seems to be involved in an RecBC-independent recombinational process of DNA repair. It may act with RecF and RecO. The polypeptide is Recombination protein RecR (Methylococcus capsulatus (strain ATCC 33009 / NCIMB 11132 / Bath)).